We begin with the raw amino-acid sequence, 187 residues long: UPF0340 protein SP_0663 (187 aa).

This sequence belongs to the UPF0340 family.

This chain is UPF0340 protein SP_0663, found in Streptococcus pneumoniae serotype 4 (strain ATCC BAA-334 / TIGR4).